Here is a 772-residue protein sequence, read N- to C-terminus: Cadherin-19 (772 aa).

An N-terminal signal peptide occupies residues 1–21 (MNCYLLLRFMLGIPLLWPCLG). A propeptide spanning residues 22–43 (ATENSQTKKVKQPVRSHLRVKR) is cleaved from the precursor. 5 Cadherin domains span residues 44–148 (GWVW…EPKF), 149–256 (LDEP…KPIF), 257–370 (KESL…PPLF), 371–470 (LLPY…APEF), and 470–581 (FSQY…STQT). At 44–596 (GWVWNQFFVP…LVLSMGFKTE (553 aa)) the chain is on the extracellular side. N-linked (GlcNAc...) asparagine glycosylation is found at N57 and N74. N419, N437, N508, N515, N516, and N534 each carry an N-linked (GlcNAc...) asparagine glycan. The chain crosses the membrane as a helical span at residues 597–617 (VIIAILICIMIIFGFIFLTLG). At 618-772 (LKQRRKQILF…MFGSAVQSNN (155 aa)) the chain is on the cytoplasmic side.

In terms of tissue distribution, expressed in many tissues, with the exception of uterus.

It localises to the cell membrane. In terms of biological role, cadherins are calcium-dependent cell adhesion proteins. They preferentially interact with themselves in a homophilic manner in connecting cells; cadherins may thus contribute to the sorting of heterogeneous cell types. This Homo sapiens (Human) protein is Cadherin-19 (CDH19).